The following is a 176-amino-acid chain: ATP-dependent protease subunit HslV (176 aa).

Thr-2 is a catalytic residue. Na(+)-binding residues include Ala-157, Cys-160, and Thr-163.

Belongs to the peptidase T1B family. HslV subfamily. As to quaternary structure, a double ring-shaped homohexamer of HslV is capped on each side by a ring-shaped HslU homohexamer. The assembly of the HslU/HslV complex is dependent on binding of ATP.

It localises to the cytoplasm. The enzyme catalyses ATP-dependent cleavage of peptide bonds with broad specificity.. With respect to regulation, allosterically activated by HslU binding. Protease subunit of a proteasome-like degradation complex believed to be a general protein degrading machinery. This is ATP-dependent protease subunit HslV from Buchnera aphidicola subsp. Acyrthosiphon pisum (strain APS) (Acyrthosiphon pisum symbiotic bacterium).